The following is a 235-amino-acid chain: Small ribosomal subunit protein uS3 (235 aa).

The KH type-2 domain maps to 39–107 (VRSYVKKKLI…PAQVNISEIR (69 aa)).

This sequence belongs to the universal ribosomal protein uS3 family. As to quaternary structure, part of the 30S ribosomal subunit. Forms a tight complex with proteins S10 and S14.

Its function is as follows. Binds the lower part of the 30S subunit head. Binds mRNA in the 70S ribosome, positioning it for translation. The chain is Small ribosomal subunit protein uS3 from Buchnera aphidicola subsp. Cinara cedri (strain Cc).